A 159-amino-acid chain; its full sequence is MNITIISVGKIKEKYLSGAIIEYSKRISRYSKLDIIEVADEKTPENPSDVEKSKLLEKEAERILKYLKKDSFVITLEILGKELTSESLAKKINDLSISGKSDITFIIGGSLGLSRNISEISDFKLSFSKMTFPHQLMRVILLEQIYRSFRIINGEPYHK.

Residues L76, G108, and 127 to 132 each bind S-adenosyl-L-methionine; that span reads FSKMTF.

It belongs to the RNA methyltransferase RlmH family.

It localises to the cytoplasm. It carries out the reaction pseudouridine(1915) in 23S rRNA + S-adenosyl-L-methionine = N(3)-methylpseudouridine(1915) in 23S rRNA + S-adenosyl-L-homocysteine + H(+). Functionally, specifically methylates the pseudouridine at position 1915 (m3Psi1915) in 23S rRNA. In Methanococcus maripaludis (strain C6 / ATCC BAA-1332), this protein is Putative ribosomal RNA large subunit methyltransferase H.